The following is a 373-amino-acid chain: Centrosomal protein of 41 kDa (373 aa).

The tract at residues 91 to 137 (LEDNDSATSEADAEIAAKTNGKGSPEEQSPSPVQFINSTGAGDSSRS) is disordered. Phosphoserine is present on residues Ser-96 and Ser-99. Position 109 is a phosphothreonine (Thr-109). Phosphoserine is present on residues Ser-114 and Ser-121. Polar residues predominate over residues 116 to 137 (EEQSPSPVQFINSTGAGDSSRS). Positions 169 to 266 (PDCPFLLLDV…LAQKFPEGLV (98 aa)) constitute a Rhodanese domain. Residues 317-373 (DQGPADNPSRLNQNNSAGKDSKVAACRGGQNLPTSCPASHSSPRTLTSGHLQGKPWK) form a disordered region. Polar residues predominate over residues 325 to 334 (SRLNQNNSAG). Arg-343 carries the omega-N-methylarginine modification. Positions 347 to 366 (NLPTSCPASHSSPRTLTSGH) are enriched in polar residues.

Belongs to the CEP41 family. As to quaternary structure, found in a complex with TTLL6.

The protein resides in the cytoplasm. The protein localises to the cytoskeleton. Its subcellular location is the microtubule organizing center. It localises to the centrosome. It is found in the cell projection. The protein resides in the cilium. The protein localises to the cilium basal body. Functionally, required during ciliogenesis for tubulin glutamylation in cilium. Probably acts by participating in the transport of TTLL6, a tubulin polyglutamylase, between the basal body and the cilium. This Mus musculus (Mouse) protein is Centrosomal protein of 41 kDa (Cep41).